A 541-amino-acid chain; its full sequence is Amino-acid permease 2 (541 aa).

Polar residues predominate over residues 1-22 (MSFSPPNKSADATIQITEMTRQ). The interval 1 to 43 (MSFSPPNKSADATIQITEMTRQGTPSSGEAAASTPSTSSTESG) is disordered. The span at 23 to 41 (GTPSSGEAAASTPSTSSTE) shows a compositional bias: low complexity. 12 helical membrane passes run 66-86 (FSFAMSISGVYGTLMSTWIYG), 90-110 (GGAAAIMWSWIIGGAGGWALA), 139-159 (VPFLCWIAGYLNLVGTVAGGA), 188-208 (VVGVMIGLTTIHAMINTLPTA), 214-234 (TSGYVVFHISVLLGACVTLLV), 255-275 (GWSPPGFAFLFGCLTPAWIMT), 301-321 (ATTFTYVIGFFFNLVLVVCMG), 347-367 (PAIFFTLCGFGVMNLVAIPGI), 399-419 (PLIAVWTYAVLEIIINLLGLA), 424-444 (IGAVFNVCTVALNVSYVIPII), 464-484 (VWVNAFAVAWNTFMAVIFFFP), and 496-516 (YAIVVFFFVLIFALVFWYTHG).

This sequence belongs to the amino acid-polyamine-organocation (APC) superfamily.

It localises to the membrane. The polypeptide is Amino-acid permease 2 (aap-2) (Neurospora crassa (strain ATCC 24698 / 74-OR23-1A / CBS 708.71 / DSM 1257 / FGSC 987)).